The primary structure comprises 120 residues: Aspartate 1-decarboxylase (120 aa).

S25 serves as the catalytic Schiff-base intermediate with substrate; via pyruvic acid. Position 25 is a pyruvic acid (Ser) (S25). T57 lines the substrate pocket. The active-site Proton donor is the Y58. 73–75 (GAA) lines the substrate pocket.

Belongs to the PanD family. Heterooctamer of four alpha and four beta subunits. Pyruvate serves as cofactor. Post-translationally, is synthesized initially as an inactive proenzyme, which is activated by self-cleavage at a specific serine bond to produce a beta-subunit with a hydroxyl group at its C-terminus and an alpha-subunit with a pyruvoyl group at its N-terminus.

It localises to the cytoplasm. The catalysed reaction is L-aspartate + H(+) = beta-alanine + CO2. Its pathway is cofactor biosynthesis; (R)-pantothenate biosynthesis; beta-alanine from L-aspartate: step 1/1. Its function is as follows. Catalyzes the pyruvoyl-dependent decarboxylation of aspartate to produce beta-alanine. This Thermosipho africanus (strain TCF52B) protein is Aspartate 1-decarboxylase.